Here is a 390-residue protein sequence, read N- to C-terminus: 2-deoxy-scyllo-inosose synthase (390 aa).

Residues D42, 73-76, 105-109, 129-130, 140-142, and 151-152 each bind NAD(+); these read EQNK, GVTGN, TT, SLK, and KN. Residue K142 is part of the active site. E184 provides a ligand contact to Co(2+). E244 is an active-site residue. H247 and H263 together coordinate Co(2+). Residues 371-390 are disordered; that stretch reads PPRPAAARTDDAATVLGGAG.

The protein belongs to the sugar phosphate cyclases superfamily. DOI synthase family. The cofactor is NAD(+). It depends on Co(2+) as a cofactor.

The enzyme catalyses D-glucose 6-phosphate = 2-deoxy-L-scyllo-inosose + phosphate. Its pathway is metabolic intermediate biosynthesis; 2-deoxystreptamine biosynthesis; 2-deoxystreptamine from D-glucose 6-phosphate: step 1/4. It functions in the pathway antibiotic biosynthesis; kanamycin biosynthesis. In terms of biological role, catalyzes the intramolecular carbocycle formation from D-glucose-6-phosphate to 2-deoxy-scyllo-inosose (DOI). The chain is 2-deoxy-scyllo-inosose synthase (kanC) from Streptomyces kanamyceticus.